The chain runs to 144 residues: Lysozyme C II (144 aa).

An N-terminal signal peptide occupies residues Met-1–Ala-15. The C-type lysozyme domain occupies Lys-16–Val-144. Cystine bridges form between Cys-21-Cys-142, Cys-45-Cys-130, Cys-79-Cys-95, and Cys-91-Cys-109. Residues Glu-50 and Asp-67 contribute to the active site.

It localises to the secreted. The catalysed reaction is Hydrolysis of (1-&gt;4)-beta-linkages between N-acetylmuramic acid and N-acetyl-D-glucosamine residues in a peptidoglycan and between N-acetyl-D-glucosamine residues in chitodextrins.. Lysozymes have primarily a bacteriolytic function; those in tissues and body fluids are associated with the monocyte-macrophage system and enhance the activity of immunoagents. Has antibacterial activity against the Gram positive bacterium P.citreus. Has no antibacterial activity against the Gram negative bacteria E.coli and Y.ruckeri. Does not have hemolytic activity against trout erythrocytes. The sequence is that of Lysozyme C II from Oncorhynchus mykiss (Rainbow trout).